The chain runs to 25 residues: Cysteine protease inhibitor 2 (25 aa).

Belongs to the protease inhibitor I3 (leguminous Kunitz-type inhibitor) family. In terms of tissue distribution, cortex of tuber.

Inhibitor of subtilisin. Inhibits moderately trypsin and chymotrypsin (serine proteases). May protect the plant by inhibiting proteases of invading organisms. The polypeptide is Cysteine protease inhibitor 2 (Solanum tuberosum (Potato)).